The primary structure comprises 192 residues: CASP-like protein 1E1 (192 aa).

A disordered region spans residues 1-22 (MDSQNKNSVDAMDGIESRGMKE). Topologically, residues 1-29 (MDSQNKNSVDAMDGIESRGMKERGGRTNS) are cytoplasmic. A helical membrane pass occupies residues 30 to 50 (FLVLRVLAFVLTSTAAIVHGV). Over 51–81 (NNQTETVPIQLTSSMPPLYVPVVAKWHYLSA) the chain is Extracellular. Residue Asn-52 is glycosylated (N-linked (GlcNAc...) asparagine). Residues 82–102 (FVFFVVSNAIACSYAAISVML) traverse the membrane as a helical segment. Over 103-118 (SFCGKKSMVPIILTLD) the chain is Cytoplasmic. Residues 119-139 (LLMVALLFSSNGAATAIGVMG) traverse the membrane as a helical segment. Residues 140–161 (YKGNSHVKWNKVCNVFGKFCNQ) are Extracellular-facing. Residues 162-182 (VAASVVLSLIGSIVFVLLVML) traverse the membrane as a helical segment. At 183-192 (TAFRLHNKSK) the chain is on the cytoplasmic side.

Belongs to the Casparian strip membrane proteins (CASP) family. As to quaternary structure, homodimer and heterodimers.

The protein resides in the cell membrane. This Ricinus communis (Castor bean) protein is CASP-like protein 1E1.